A 413-amino-acid chain; its full sequence is S-adenosylmethionine synthase (413 aa).

Residue H15 coordinates ATP. D17 contacts Mg(2+). E43 contacts K(+). Residues E56 and Q100 each coordinate L-methionine. The interval 100–110 (QSPDISQGVNE) is flexible loop. ATP contacts are provided by residues 171–173 (DGK), 248–249 (KF), D257, 263–264 (RK), A280, and K284. An L-methionine-binding site is contributed by D257. K288 is a binding site for L-methionine.

This sequence belongs to the AdoMet synthase family. As to quaternary structure, homotetramer; dimer of dimers. The cofactor is Mg(2+). Requires K(+) as cofactor.

Its subcellular location is the cytoplasm. It carries out the reaction L-methionine + ATP + H2O = S-adenosyl-L-methionine + phosphate + diphosphate. It participates in amino-acid biosynthesis; S-adenosyl-L-methionine biosynthesis; S-adenosyl-L-methionine from L-methionine: step 1/1. Its function is as follows. Catalyzes the formation of S-adenosylmethionine (AdoMet) from methionine and ATP. The overall synthetic reaction is composed of two sequential steps, AdoMet formation and the subsequent tripolyphosphate hydrolysis which occurs prior to release of AdoMet from the enzyme. This Prochlorococcus marinus (strain AS9601) protein is S-adenosylmethionine synthase.